Reading from the N-terminus, the 61-residue chain is [Val1,Thr6]-bradykinyl-Gln,Ser (61 aa).

The first 22 residues, 1–22, serve as a signal peptide directing secretion; sequence MSILKKSLFLVLFLGLVSFSIC. Positions 23-50 are excised as a propeptide; it reads EEEKREAEEEENEDEIEEQSEEKKRFEP. The disordered stretch occupies residues 25–61; that stretch reads EKREAEEEENEDEIEEQSEEKKRFEPVPPGFTPFRQS. Acidic residues predominate over residues 30 to 42; it reads EEEENEDEIEEQS. 4-hydroxyproline; in form [Val1,Hyp2,Thr6]-Bradykinyl-Gln,Ser and [Val1,Hyp2,Thr6]-Bradykinin is present on proline 52.

It belongs to the frog skin active peptide (FSAP) family. Bradykinin-related peptide subfamily. As to expression, expressed by the skin glands.

It localises to the secreted. Induces contraction of rat ileum smooth muscle (EC(50)=2.73 uM) but has no activity towards smooth muscle from tail artery, urinary bladder or uterus up to concentrations of 100 uM. Binds to both bradykinin receptor B1 (BDKRB1) and B2 (BDKRB2); the effect via BDKRB1 is stronger. Its function is as follows. [Val1,Hyp2,Thr6]-bradykinin-Gln,Ser: Induces contraction of rat ileum smooth muscle (EC(50)=710 nM) but has no activity towards smooth muscle from tail artery, urinary bladder or uterus up to concentrations of 100 uM. Binds to both bradykinin receptor B1 (BDKRB1) and B2 (BDKRB2); the effect via BDKRB1 is stronger. Induces contraction of guinea pig ileum smooth muscle. This Pithecopus hypochondrialis (Orange-legged leaf frog) protein is [Val1,Thr6]-bradykinyl-Gln,Ser.